A 164-amino-acid polypeptide reads, in one-letter code: Inner membrane assembly complex subunit 17 (164 aa).

A mitochondrion-targeting transit peptide spans 1-28 (MIKTAKISTLRLAITRNARNLSFTTLVR). Residues 29-97 (SPEVDNSKIK…NEVPLKRFTR (69 aa)) lie on the Mitochondrial matrix side of the membrane. A helical membrane pass occupies residues 98 to 118 (PLWIFILMASTFYLGAHLVWW). Residues 119–164 (KLAYEKKEVELKHKVDSLETTLKDVMKEKATGPTPCNNKKSWYKFW) lie on the Mitochondrial intermembrane side of the membrane. The stretch at 121 to 149 (AYEKKEVELKHKVDSLETTLKDVMKEKAT) forms a coiled coil.

The protein belongs to the INA17 family. Component of the inner membrane assembly (INA) complex, composed of INA17 and INA22. Interacts with a subset of F(1)F(0)-ATP synthase subunits of the F(1)-domain and the peripheral stalk.

Its subcellular location is the mitochondrion inner membrane. Component of the INA complex (INAC) that promotes the biogenesis of mitochondrial F(1)F(0)-ATP synthase. INAC facilitates the assembly of the peripheral stalk and promotes the assembly of the catalytic F(1)-domain with the membrane-embedded F(0)-domain. The chain is Inner membrane assembly complex subunit 17 from Candida glabrata (strain ATCC 2001 / BCRC 20586 / JCM 3761 / NBRC 0622 / NRRL Y-65 / CBS 138) (Yeast).